Consider the following 301-residue polypeptide: Ubiquitin thioesterase OTU1 (301 aa).

Residues 4 to 80 form a UBX-like region; it reads KVTGAGINQV…TIESSDSNES (77 aa). The OTU domain occupies 109 to 229; the sequence is LSVHPVLDDN…GIHYDSLTMN (121 aa). The segment at 114–120 is cys-loop; the sequence is VLDDNSC. Asp-117 is a catalytic residue. Catalysis depends on Cys-120, which acts as the Nucleophile. A Glycyl lysine isopeptide (Lys-Gly) (interchain with G-Cter in ubiquitin) cross-link involves residue Lys-160. A variable-loop region spans residues 169 to 179; the sequence is ILKMESWGGAI. Residues 218–222 form a his-loop region; sequence FNGIH. Ile-221 contributes to the substrate binding site. Residue His-222 is part of the active site. The interval 243–248 is S2 site; the sequence is DDVLTA. A C2H2-type zinc finger spans residues 270 to 294; the sequence is IKCNTCQMTFVGEREVARHAESTGH. The active site involves His-294.

In terms of assembly, forms a complex composed of CDC48, NPL4, UFD1, DOA1, SHP1 and deubiquitinase OTU1; within the complex interacts with CDC48 and DOA1/UFD3.

It localises to the cytoplasm. Its subcellular location is the nucleus. The enzyme catalyses Thiol-dependent hydrolysis of ester, thioester, amide, peptide and isopeptide bonds formed by the C-terminal Gly of ubiquitin (a 76-residue protein attached to proteins as an intracellular targeting signal).. Its function is as follows. Hydrolase that can remove conjugated ubiquitin from proteins and may therefore play an important regulatory role at the level of protein turnover by preventing degradation. Participates in the regulation of the ubiquitin conjugation pathway involving CDC48 by hindering multiubiquitination of substrates at the CDC48 chaperone. May be indirectly involved in PIS1 gene expression. This Saccharomyces cerevisiae (strain ATCC 204508 / S288c) (Baker's yeast) protein is Ubiquitin thioesterase OTU1 (OTU1).